The sequence spans 359 residues: Tryptophan 2,3-dioxygenase (359 aa).

Substrate is bound by residues 38–42 (FIIVH) and Arg109. Residue His295 coordinates heme. Thr309 lines the substrate pocket.

It belongs to the tryptophan 2,3-dioxygenase family. Homotetramer. Heme is required as a cofactor.

It carries out the reaction L-tryptophan + O2 = N-formyl-L-kynurenine. The protein operates within amino-acid degradation; L-tryptophan degradation via kynurenine pathway; L-kynurenine from L-tryptophan: step 1/2. Functionally, heme-dependent dioxygenase that catalyzes the oxidative cleavage of the L-tryptophan (L-Trp) pyrrole ring and converts L-tryptophan to N-formyl-L-kynurenine. Catalyzes the oxidative cleavage of the indole moiety. This is Tryptophan 2,3-dioxygenase from Bdellovibrio bacteriovorus (strain ATCC 15356 / DSM 50701 / NCIMB 9529 / HD100).